Here is a 67-residue protein sequence, read N- to C-terminus: Large ribosomal subunit protein uL29 (67 aa).

The protein belongs to the universal ribosomal protein uL29 family.

The sequence is that of Large ribosomal subunit protein uL29 from Desulfitobacterium hafniense (strain DSM 10664 / DCB-2).